The primary structure comprises 170 residues: Photosystem I assembly protein Ycf3 (170 aa).

3 TPR repeats span residues 35–68 (AFTH…EIDP), 72–105 (SYIL…NSSL), and 120–153 (GEQA…APSN).

This sequence belongs to the Ycf3 family.

The protein resides in the plastid. Its subcellular location is the chloroplast thylakoid membrane. Essential for the assembly of the photosystem I (PSI) complex. May act as a chaperone-like factor to guide the assembly of the PSI subunits. The sequence is that of Photosystem I assembly protein Ycf3 from Anthoceros angustus (Hornwort).